A 476-amino-acid chain; its full sequence is 3-isopropylmalate dehydratase large subunit (476 aa).

[4Fe-4S] cluster-binding residues include Cys357, Cys417, and Cys420.

The protein belongs to the aconitase/IPM isomerase family. LeuC type 1 subfamily. In terms of assembly, heterodimer of LeuC and LeuD. Requires [4Fe-4S] cluster as cofactor.

The enzyme catalyses (2R,3S)-3-isopropylmalate = (2S)-2-isopropylmalate. The protein operates within amino-acid biosynthesis; L-leucine biosynthesis; L-leucine from 3-methyl-2-oxobutanoate: step 2/4. Functionally, catalyzes the isomerization between 2-isopropylmalate and 3-isopropylmalate, via the formation of 2-isopropylmaleate. The chain is 3-isopropylmalate dehydratase large subunit from Mycobacterium avium (strain 104).